The sequence spans 64 residues: Alpha-conotoxin CnIL (64 aa).

The N-terminal stretch at 1 to 21 (MGMRMMFTVFLLVVLTTTVVS) is a signal peptide. Residues 22–49 (FPSDSASDGRDDEAKDERSDIYESKRDG) constitute a propeptide that is removed on maturation. 2 cysteine pairs are disulfide-bonded: Cys51–Cys56 and Cys52–Cys62. Residue Cys62 is modified to Cysteine amide.

This sequence belongs to the conotoxin A superfamily. In terms of tissue distribution, expressed by the venom duct.

Its subcellular location is the secreted. The sequence is that of Alpha-conotoxin CnIL from Conus consors (Singed cone).